A 524-amino-acid chain; its full sequence is 2-isopropylmalate synthase (524 aa).

Residues 5–267 enclose the Pyruvate carboxyltransferase domain; that stretch reads VIIFDTTLRD…HTNIRHSEIH (263 aa). Residues D14, H202, H204, and N238 each coordinate Mn(2+). The regulatory domain stretch occupies residues 392–524; sequence KLEYLGVQSG…KTDKINTESV (133 aa).

Belongs to the alpha-IPM synthase/homocitrate synthase family. LeuA type 1 subfamily. In terms of assembly, homodimer. Mn(2+) serves as cofactor.

The protein localises to the cytoplasm. The catalysed reaction is 3-methyl-2-oxobutanoate + acetyl-CoA + H2O = (2S)-2-isopropylmalate + CoA + H(+). The protein operates within amino-acid biosynthesis; L-leucine biosynthesis; L-leucine from 3-methyl-2-oxobutanoate: step 1/4. In terms of biological role, catalyzes the condensation of the acetyl group of acetyl-CoA with 3-methyl-2-oxobutanoate (2-ketoisovalerate) to form 3-carboxy-3-hydroxy-4-methylpentanoate (2-isopropylmalate). The protein is 2-isopropylmalate synthase of Aeromonas salmonicida (strain A449).